A 1252-amino-acid polypeptide reads, in one-letter code: Fanconi anemia group J protein homolog (1252 aa).

A Helicase ATP-binding domain is found at 11-452; it reads GGVKIMFPCK…KDHEQLRAMC (442 aa). A Nuclear localization signal motif is present at residues 164-181; that stretch reads RKRIRPLETEQQVRKRHC. 191–198 contributes to the ATP binding site; that stretch reads ALEVYNQR. Residues Cys292, Cys308, Cys320, and Cys360 each contribute to the [4Fe-4S] cluster site. Residues 403–406 carry the DEAH box motif; sequence DEAH. 2 disordered regions span residues 919–1008 and 1212–1252; these read SKEP…DRTN and TNGE…STST. 2 stretches are compositionally biased toward polar residues: residues 920–930 and 952–969; these read KEPSSASQQEA and HLTT…NQPG. The segment covering 989–1008 has biased composition (basic and acidic residues); that stretch reads MDSTPRRPANKTEKKSDRTN. Positions 1215 to 1224 are enriched in acidic residues; sequence EEAEQVESQE. Residues 1228–1239 are compositionally biased toward basic residues; the sequence is KKRKISLSRSRN.

This sequence belongs to the DEAD box helicase family. DEAH subfamily. Requires [4Fe-4S] cluster as cofactor.

Its subcellular location is the nucleus. It carries out the reaction Couples ATP hydrolysis with the unwinding of duplex DNA at the replication fork by translocating in the 5'-3' direction. This creates two antiparallel DNA single strands (ssDNA). The leading ssDNA polymer is the template for DNA polymerase III holoenzyme which synthesizes a continuous strand.. It catalyses the reaction ATP + H2O = ADP + phosphate + H(+). DNA-dependent helicase and 5' to 3' DNA helicase required for the maintenance of chromosomal stability. Involved in the repair of DNA double-strand breaks by homologous recombination. Involved in the repair of abasic sites at replication forks by promoting the degradation of DNA-protein cross-links: acts by catalyzing unfolding of HMCES DNA-protein cross-link via its helicase activity, exposing the underlying DNA and enabling cleavage of the DNA-protein adduct by the SPRTN metalloprotease. The polypeptide is Fanconi anemia group J protein homolog (BRIP1) (Gallus gallus (Chicken)).